The chain runs to 85 residues: MNYLVMISFAFLLMTGVESVRDAYIAQNYNCVYHCARDAYCNELCTKNGAKSGSCPYLGEHKFACYCKDLPDNVPIRVPGKCHRR.

Positions 1–19 (MNYLVMISFAFLLMTGVES) are cleaved as a signal peptide. The region spanning 21-83 (RDAYIAQNYN…VPIRVPGKCH (63 aa)) is the LCN-type CS-alpha/beta domain. Intrachain disulfides connect Cys31-Cys82, Cys35-Cys55, Cys41-Cys65, and Cys45-Cys67. Residues 84–85 (RR) constitute a propeptide, removed by a carboxypeptidase.

It belongs to the long (4 C-C) scorpion toxin superfamily. Sodium channel inhibitor family. Alpha subfamily. As to expression, expressed by the venom gland.

It is found in the secreted. Alpha toxins bind voltage-independently at site-3 of sodium channels (Nav) and inhibit the inactivation of the activated channels, thereby blocking neuronal transmission. Shows a high toxicity toward insects and moderate toxicity against mammals. This is Toxin BmKaIT1 from Olivierus martensii (Manchurian scorpion).